Consider the following 438-residue polypeptide: Thymidine phosphorylase (438 aa).

Belongs to the thymidine/pyrimidine-nucleoside phosphorylase family. In terms of assembly, homodimer.

It carries out the reaction thymidine + phosphate = 2-deoxy-alpha-D-ribose 1-phosphate + thymine. The protein operates within pyrimidine metabolism; dTMP biosynthesis via salvage pathway; dTMP from thymine: step 1/2. In terms of biological role, the enzymes which catalyze the reversible phosphorolysis of pyrimidine nucleosides are involved in the degradation of these compounds and in their utilization as carbon and energy sources, or in the rescue of pyrimidine bases for nucleotide synthesis. This chain is Thymidine phosphorylase, found in Agrobacterium fabrum (strain C58 / ATCC 33970) (Agrobacterium tumefaciens (strain C58)).